The chain runs to 301 residues: ATP synthase gamma chain (301 aa).

It belongs to the ATPase gamma chain family. As to quaternary structure, F-type ATPases have 2 components, CF(1) - the catalytic core - and CF(0) - the membrane proton channel. CF(1) has five subunits: alpha(3), beta(3), gamma(1), delta(1), epsilon(1). CF(0) has three main subunits: a, b and c.

It localises to the cell inner membrane. Produces ATP from ADP in the presence of a proton gradient across the membrane. The gamma chain is believed to be important in regulating ATPase activity and the flow of protons through the CF(0) complex. This chain is ATP synthase gamma chain, found in Bordetella pertussis (strain Tohama I / ATCC BAA-589 / NCTC 13251).